The primary structure comprises 369 residues: ATP-dependent (S)-NAD(P)H-hydrate dehydratase (369 aa).

The 343-residue stretch at leucine 14–leucine 356 folds into the YjeF C-terminal domain. (6S)-NADPHX-binding positions include glycine 126 and asparagine 179–arginine 185. ATP is bound by residues lysine 231–aspartate 235 and glycine 250–glycine 259. Aspartate 260 contributes to the (6S)-NADPHX binding site. Basic and acidic residues predominate over residues glycine 284–lysine 306. Positions glycine 284–arginine 307 are disordered.

Belongs to the NnrD/CARKD family. Mg(2+) serves as cofactor.

The protein localises to the cytoplasm. It carries out the reaction (6S)-NADHX + ATP = ADP + phosphate + NADH + H(+). The enzyme catalyses (6S)-NADPHX + ATP = ADP + phosphate + NADPH + H(+). Its function is as follows. Catalyzes the dehydration of the S-form of NAD(P)HX at the expense of ATP, which is converted to ADP. Together with NAD(P)HX epimerase, which catalyzes the epimerization of the S- and R-forms, the enzyme allows the repair of both epimers of NAD(P)HX, a damaged form of NAD(P)H that is a result of enzymatic or heat-dependent hydration. The protein is ATP-dependent (S)-NAD(P)H-hydrate dehydratase of Emericella nidulans (strain FGSC A4 / ATCC 38163 / CBS 112.46 / NRRL 194 / M139) (Aspergillus nidulans).